The following is a 619-amino-acid chain: 1-deoxy-D-xylulose-5-phosphate synthase (619 aa).

Thiamine diphosphate-binding positions include H63 and 104 to 106 (GHS). A Mg(2+)-binding site is contributed by D136. Residues 137-138 (GS), N165, Y272, and E353 contribute to the thiamine diphosphate site. Residue N165 coordinates Mg(2+).

Belongs to the transketolase family. DXPS subfamily. As to quaternary structure, homodimer. The cofactor is Mg(2+). Thiamine diphosphate serves as cofactor.

The enzyme catalyses D-glyceraldehyde 3-phosphate + pyruvate + H(+) = 1-deoxy-D-xylulose 5-phosphate + CO2. It functions in the pathway metabolic intermediate biosynthesis; 1-deoxy-D-xylulose 5-phosphate biosynthesis; 1-deoxy-D-xylulose 5-phosphate from D-glyceraldehyde 3-phosphate and pyruvate: step 1/1. Its function is as follows. Catalyzes the acyloin condensation reaction between C atoms 2 and 3 of pyruvate and glyceraldehyde 3-phosphate to yield 1-deoxy-D-xylulose-5-phosphate (DXP). The chain is 1-deoxy-D-xylulose-5-phosphate synthase from Wolinella succinogenes (strain ATCC 29543 / DSM 1740 / CCUG 13145 / JCM 31913 / LMG 7466 / NCTC 11488 / FDC 602W) (Vibrio succinogenes).